A 560-amino-acid chain; its full sequence is Interferon alpha/beta receptor 1 (560 aa).

The signal sequence occupies residues 1–24 (MLSLLGATTLMLVAGRWVLPAASG). Over 25–437 (EANLKSENVE…EKTKPGNTSK (413 aa)) the chain is Extracellular. N-linked (GlcNAc...) asparagine glycosylation is found at Asn-47 and Asn-55. A disulfide bridge links Cys-76 with Cys-84. 4 N-linked (GlcNAc...) asparagine glycosylation sites follow: Asn-85, Asn-108, Asn-109, and Asn-172. Fibronectin type-III domains follow at residues 126–226 (QIGP…TTER), 231–329 (SPEN…TEVK), and 333–433 (FPPV…TKPG). Residues Cys-199 and Cys-220 are joined by a disulfide bond. Asn-222, Asn-285, Asn-313, Asn-359, and Asn-377 each carry an N-linked (GlcNAc...) asparagine glycan. Cysteines 283 and 291 form a disulfide. Cys-404 and Cys-427 are joined by a disulfide. Residue Asn-434 is glycosylated (N-linked (GlcNAc...) asparagine). The helical transmembrane segment at 438–458 (TWLIAGICTALFSILVVIYVV) threads the bilayer. Residues 459–560 (RVFLRCVKYV…SEEFLQQDSV (102 aa)) are Cytoplasmic-facing. Cys-464 is lipidated: S-palmitoyl cysteine. A phosphotyrosine; by TYK2 mark is found at Tyr-467 and Tyr-482. The segment at 492-501 (LLSTSEEQTE) is important for interaction with TYK2. Ser-496 and Ser-536 each carry phosphoserine. The tract at residues 524 to 560 (VHEEYNSQASQDSGNYSNEDENSGSKISEEFLQQDSV) is disordered. Over residues 529 to 540 (NSQASQDSGNYS) the composition is skewed to polar residues.

It belongs to the type II cytokine receptor family. As to quaternary structure, heterodimer with IFNAR2; forming the receptor for type I interferon. Interacts with TYK2. Interacts with STAT1 and STAT2; the interaction requires its phosphorylation at Tyr-482. Interacts (serine-phosphorylated form) with FBXW11, the substrate recognition component of a SCF (SKP1-CUL1-F-box protein) E3 ubiquitin-protein ligase complex. Interacts with SHMT2; this promotes interaction with ABRAXAS2 and the BRISC complex. Interacts with TRIM10; this interaction prevents association between IFNAR1 and TYK2. Ubiquitinated, leading to its internalization and degradation. Polyubiquitinated via 'Lys-48'-linked and 'Lys-63'-linked ubiquitin chains, leading to receptor internalization and lysosomal degradation. The 'Lys-63'-linked ubiquitin chains are cleaved off by the BRISC complex. Post-translationally, phosphorylated on tyrosine residues in response to interferon-binding: phosphorylation by TYK2 tyrosine kinase creates docking sites for STAT proteins. Phosphorylated on serine residues in response to interferon binding; this promotes interaction with FBXW11 and ubiquitination. In terms of processing, palmitoylation at Cys-464 is required for the activation of STAT1 and STAT2. In terms of tissue distribution, expressed in the endometrium. Expressed in all tissues examined except conceptus at day 15 of pregnancy.

It localises to the cell membrane. Its subcellular location is the late endosome. The protein localises to the lysosome. Functionally, together with IFNAR2, forms the heterodimeric receptor for type I interferons (including interferons alpha, beta, epsilon, omega and kappa). Type I interferon binding activates the JAK-STAT signaling cascade, resulting in transcriptional activation or repression of interferon-regulated genes that encode the effectors of the interferon response. Mechanistically, type I interferon-binding brings the IFNAR1 and IFNAR2 subunits into close proximity with one another, driving their associated Janus kinases (JAKs) (TYK2 bound to IFNAR1 and JAK1 bound to IFNAR2) to cross-phosphorylate one another. The activated kinases phosphorylate specific tyrosine residues on the intracellular domains of IFNAR1 and IFNAR2, forming docking sites for the STAT transcription factors. STAT proteins are then phosphorylated by the JAKs, promoting their translocation into the nucleus to regulate expression of interferon-regulated genes. Can also act independently of IFNAR2: form an active IFNB1 receptor by itself and activate a signaling cascade that does not involve activation of the JAK-STAT pathway. The chain is Interferon alpha/beta receptor 1 (IFNAR1) from Ovis aries (Sheep).